We begin with the raw amino-acid sequence, 72 residues long: Brevinin-2GHb (72 aa).

A signal peptide spans Met-1 to Cys-22. Residues Glu-23–Arg-42 constitute a propeptide that is removed on maturation. Cys-66 and Cys-72 are oxidised to a cystine.

As to expression, expressed by the skin glands.

The protein localises to the secreted. Antimicrobial peptide. Active against the Gram-positive bacteria S.aureus FDA209P (MIC=16.5 ug/ml) and B.subtilis ATCC 6633 (MIC&gt;64 ug/ml), and the Gram-negative bacteria E.coli O111 (MIC=8.2 ug/ml) and E.coli ATCC 25922 (MIC=8.2 ug/ml). Not active against the fungus C.albicans. This is Brevinin-2GHb from Sylvirana guentheri (Gunther's frog).